Reading from the N-terminus, the 84-residue chain is MPVIKSAMKRVRTSEKAAARNRSQMSAMRTSIKAFEIAATNNAENANELLQTAYSRIDRAKSKGLIKANNAGRKKSRLAKMLSK.

The segment at 1-25 (MPVIKSAMKRVRTSEKAAARNRSQM) is disordered.

Belongs to the bacterial ribosomal protein bS20 family.

In terms of biological role, binds directly to 16S ribosomal RNA. This Pediococcus pentosaceus (strain ATCC 25745 / CCUG 21536 / LMG 10740 / 183-1w) protein is Small ribosomal subunit protein bS20.